Here is a 517-residue protein sequence, read N- to C-terminus: Variant surface glycoprotein MVAT5 (517 aa).

An N-terminal signal peptide occupies residues 1–21 (MIGKAFIILSLLNELPTPTAA). 2 cysteine pairs are disulfide-bonded: C417–C430 and C426–C443. N-linked (GlcNAc...) asparagine glycosylation occurs at N435. A compositionally biased stretch (low complexity) spans 454-470 (QAAQTAGAGEGAAGTTT). A disordered region spans residues 454-487 (QAAQTAGAGEGAAGTTTDKCKDKKKDDCKSPDCK). Residues 471–487 (DKCKDKKKDDCKSPDCK) are compositionally biased toward basic and acidic residues. D495 is lipidated: GPI-anchor amidated aspartate. A propeptide spans 496-517 (SSILLNKQFALMVSAAFVALLF) (removed in mature form).

Its subcellular location is the cell membrane. VSG forms a coat on the surface of the parasite. The trypanosome evades the immune response of the host by expressing a series of antigenically distinct VSGs from an estimated 1000 VSG genes. In Trypanosoma brucei rhodesiense, this protein is Variant surface glycoprotein MVAT5.